Here is a 376-residue protein sequence, read N- to C-terminus: tRNA-specific 2-thiouridylase MnmA (376 aa).

Residues 14 to 21 and Met40 each bind ATP; that span reads GMSGGVDS. An interaction with target base in tRNA region spans residues 100 to 102; sequence NPD. The active-site Nucleophile is Cys105. Cys105 and Cys202 are disulfide-bonded. Gly129 contributes to the ATP binding site. The interval 152–154 is interaction with tRNA; sequence KDQ. Cys202 acts as the Cysteine persulfide intermediate in catalysis. An interaction with tRNA region spans residues 315–316; the sequence is RY.

The protein belongs to the MnmA/TRMU family.

The protein resides in the cytoplasm. The catalysed reaction is S-sulfanyl-L-cysteinyl-[protein] + uridine(34) in tRNA + AH2 + ATP = 2-thiouridine(34) in tRNA + L-cysteinyl-[protein] + A + AMP + diphosphate + H(+). In terms of biological role, catalyzes the 2-thiolation of uridine at the wobble position (U34) of tRNA, leading to the formation of s(2)U34. The chain is tRNA-specific 2-thiouridylase MnmA from Lactococcus lactis subsp. cremoris (strain MG1363).